The primary structure comprises 503 residues: Excitatory amino acid transporter (503 aa).

The Cytoplasmic segment spans residues 1–18; that stretch reads MPPDTRINKEIMVSWIRK. A run of 3 helical transmembrane segments spans residues 19–39, 59–79, and 96–116; these read NLLL…GFLL, LMHM…ISGL, and TYYM…VLVI. The Extracellular portion of the chain corresponds to 117–198; that stretch reads HPGDPTIKKE…SLDYVKASVE (82 aa). N-linked (GlcNAc...) asparagine glycosylation is found at Asn177 and Asn187. Helical transmembrane passes span 199 to 219, 239 to 259, 281 to 301, 369 to 389, and 400 to 420; these read YTSG…GISL, VIMK…FCLI, VTVL…IFFV, AVAA…GQVV, and IGAA…LTAV.

It belongs to the dicarboxylate/amino acid:cation symporter (DAACS) (TC 2.A.23) family.

It is found in the membrane. Transports L-glutamate and also L- and D-aspartate. Essential for terminating the postsynaptic action of glutamate by rapidly removing released glutamate from the synaptic cleft. Acts as a symport by cotransporting sodium. This is Excitatory amino acid transporter (glt-1) from Caenorhabditis elegans.